Reading from the N-terminus, the 483-residue chain is ATP synthase subunit beta (483 aa).

168–175 (GGAGVGKT) contributes to the ATP binding site.

It belongs to the ATPase alpha/beta chains family. In terms of assembly, F-type ATPases have 2 components, CF(1) - the catalytic core - and CF(0) - the membrane proton channel. CF(1) has five subunits: alpha(3), beta(3), gamma(1), delta(1), epsilon(1). CF(0) has three main subunits: a(1), b(2) and c(9-12). The alpha and beta chains form an alternating ring which encloses part of the gamma chain. CF(1) is attached to CF(0) by a central stalk formed by the gamma and epsilon chains, while a peripheral stalk is formed by the delta and b chains.

The protein resides in the cell membrane. The catalysed reaction is ATP + H2O + 4 H(+)(in) = ADP + phosphate + 5 H(+)(out). Produces ATP from ADP in the presence of a proton gradient across the membrane. The catalytic sites are hosted primarily by the beta subunits. The polypeptide is ATP synthase subunit beta (Mycobacterium ulcerans (strain Agy99)).